Consider the following 157-residue polypeptide: Crossover junction endodeoxyribonuclease RuvC (157 aa).

Active-site residues include Asp-7, Glu-67, and Asp-140. 3 residues coordinate Mg(2+): Asp-7, Glu-67, and Asp-140.

This sequence belongs to the RuvC family. In terms of assembly, homodimer which binds Holliday junction (HJ) DNA. The HJ becomes 2-fold symmetrical on binding to RuvC with unstacked arms; it has a different conformation from HJ DNA in complex with RuvA. In the full resolvosome a probable DNA-RuvA(4)-RuvB(12)-RuvC(2) complex forms which resolves the HJ. The cofactor is Mg(2+).

The protein resides in the cytoplasm. It carries out the reaction Endonucleolytic cleavage at a junction such as a reciprocal single-stranded crossover between two homologous DNA duplexes (Holliday junction).. In terms of biological role, the RuvA-RuvB-RuvC complex processes Holliday junction (HJ) DNA during genetic recombination and DNA repair. Endonuclease that resolves HJ intermediates. Cleaves cruciform DNA by making single-stranded nicks across the HJ at symmetrical positions within the homologous arms, yielding a 5'-phosphate and a 3'-hydroxyl group; requires a central core of homology in the junction. The consensus cleavage sequence is 5'-(A/T)TT(C/G)-3'. Cleavage occurs on the 3'-side of the TT dinucleotide at the point of strand exchange. HJ branch migration catalyzed by RuvA-RuvB allows RuvC to scan DNA until it finds its consensus sequence, where it cleaves and resolves the cruciform DNA. The protein is Crossover junction endodeoxyribonuclease RuvC of Rickettsia conorii (strain ATCC VR-613 / Malish 7).